The chain runs to 224 residues: Charged multivesicular body protein 4b (224 aa).

Residues 1–23 are disordered; it reads MSVFGKLFGAGGGKAGKGGPTPQ. Position 2 is an N-acetylserine (Ser2). Lys6 carries the N6-acetyllysine modification. Over residues 8–19 the composition is skewed to gly residues; that stretch reads FGAGGGKAGKGG. Positions 23 to 183 form a coiled coil; it reads QEAIQRLRDT…EELDKNLLEI (161 aa). Lys114 bears the N6-acetyllysine mark. Ser184 and Ser223 each carry phosphoserine. Residues 185 to 224 form a disordered region; that stretch reads GPETVPLPNVPSIALPSKPAKKKEEEDDDMKELENWAGSM.

It belongs to the SNF7 family. In terms of assembly, probable core component of the endosomal sorting required for transport complex III (ESCRT-III). ESCRT-III components are thought to multimerize to form a flat lattice on the perimeter membrane of the endosome. Several assembly forms of ESCRT-III may exist that interact and act sequentially. Interacts with CHMP6 and CHMP4C. Interacts with PDCD6IP; the interaction is direct. Interacts with VPS4A; the interaction is direct. Interacts with VPS4B; the interaction is direct. Interacts with CHMP7. Interacts with CFTR; the interaction requires misfolded CFTR. Interacts with PTPN23. Interacts with CC2D1B. In terms of processing, ISGylated. Isgylation weakens its interaction with VPS4A. As to expression, widely expressed. Expressed at higher level in heart and skeletal muscle. Also expressed in brain, colon, thymus, spleen, kidney, liver, small intestine, placenta, lung and peripheral blood lymphocytes.

The protein localises to the cytoplasm. It localises to the cytosol. The protein resides in the late endosome membrane. It is found in the midbody. Its subcellular location is the nucleus envelope. Its function is as follows. Probable core component of the endosomal sorting required for transport complex III (ESCRT-III) which is involved in multivesicular bodies (MVBs) formation and sorting of endosomal cargo proteins into MVBs. MVBs contain intraluminal vesicles (ILVs) that are generated by invagination and scission from the limiting membrane of the endosome and mostly are delivered to lysosomes enabling degradation of membrane proteins, such as stimulated growth factor receptors, lysosomal enzymes and lipids. The MVB pathway appears to require the sequential function of ESCRT-O, -I,-II and -III complexes. ESCRT-III proteins mostly dissociate from the invaginating membrane before the ILV is released. The ESCRT machinery also functions in topologically equivalent membrane fission events, such as the terminal stages of cytokinesis. Together with SPAST, the ESCRT-III complex promotes nuclear envelope sealing and mitotic spindle disassembly during late anaphase. Plays a role in the endosomal sorting pathway. ESCRT-III proteins are believed to mediate the necessary vesicle extrusion and/or membrane fission activities, possibly in conjunction with the AAA ATPase VPS4. When overexpressed, membrane-assembled circular arrays of CHMP4B filaments can promote or stabilize negative curvature and outward budding. CHMP4A/B/C are required for the exosomal release of SDCBP, CD63 and syndecan. Majority of the protein exists in a folded closed conformation. (Microbial infection) The ESCRT machinery also functions in topologically equivalent membrane fission events, such as the budding of enveloped viruses (HIV-1 and other lentiviruses). Via its interaction with PDCD6IP involved in HIV-1 p6- and p9-dependent virus release. The sequence is that of Charged multivesicular body protein 4b (CHMP4B) from Homo sapiens (Human).